The primary structure comprises 547 residues: CTP synthase (547 aa).

The interval 1–265 (MARFIFITGG…DQAVLDAFGI (265 aa)) is amidoligase domain. S13 serves as a coordination point for CTP. S13 contributes to the UTP binding site. Residues 14 to 19 (SLGKGL) and D71 each bind ATP. Mg(2+) is bound by residues D71 and E139. CTP is bound by residues 146–148 (DIE), 186–191 (KTKPTQ), and K222. Residues 186–191 (KTKPTQ) and K222 contribute to the UTP site. The 256-residue stretch at 291–546 (KVAIVGKYTQ…VRAAKENSRL (256 aa)) folds into the Glutamine amidotransferase type-1 domain. G353 provides a ligand contact to L-glutamine. Catalysis depends on C380, which acts as the Nucleophile; for glutamine hydrolysis. Residues 381–384 (LGMQ), E404, and R474 each bind L-glutamine. Catalysis depends on residues H519 and E521.

The protein belongs to the CTP synthase family. As to quaternary structure, homotetramer.

It carries out the reaction UTP + L-glutamine + ATP + H2O = CTP + L-glutamate + ADP + phosphate + 2 H(+). The catalysed reaction is L-glutamine + H2O = L-glutamate + NH4(+). It catalyses the reaction UTP + NH4(+) + ATP = CTP + ADP + phosphate + 2 H(+). It functions in the pathway pyrimidine metabolism; CTP biosynthesis via de novo pathway; CTP from UDP: step 2/2. Allosterically activated by GTP, when glutamine is the substrate; GTP has no effect on the reaction when ammonia is the substrate. The allosteric effector GTP functions by stabilizing the protein conformation that binds the tetrahedral intermediate(s) formed during glutamine hydrolysis. Inhibited by the product CTP, via allosteric rather than competitive inhibition. In terms of biological role, catalyzes the ATP-dependent amination of UTP to CTP with either L-glutamine or ammonia as the source of nitrogen. Regulates intracellular CTP levels through interactions with the four ribonucleotide triphosphates. This chain is CTP synthase, found in Jannaschia sp. (strain CCS1).